The following is a 338-amino-acid chain: Methionine import ATP-binding protein MetN 2 (338 aa).

Residues 2–242 (IEIEKVCVDF…PQHAFTQQLV (241 aa)) enclose the ABC transporter domain. 39 to 46 (GTSGAGKS) contacts ATP.

Belongs to the ABC transporter superfamily. Methionine importer (TC 3.A.1.24) family. In terms of assembly, the complex is composed of two ATP-binding proteins (MetN), two transmembrane proteins (MetI) and a solute-binding protein (MetQ).

Its subcellular location is the cell inner membrane. The enzyme catalyses L-methionine(out) + ATP + H2O = L-methionine(in) + ADP + phosphate + H(+). It carries out the reaction D-methionine(out) + ATP + H2O = D-methionine(in) + ADP + phosphate + H(+). Part of the ABC transporter complex MetNIQ involved in methionine import. Responsible for energy coupling to the transport system. This is Methionine import ATP-binding protein MetN 2 from Salmonella choleraesuis (strain SC-B67).